The sequence spans 742 residues: Photosystem I P700 chlorophyll a apoprotein A2 (742 aa).

Helical transmembrane passes span 46-69, 135-158, 175-199, 273-291, 336-359, 375-401, 423-445, and 525-543; these read LFST…FHVA, LFQA…LHLQ, LNHH…HVAI, IAHH…GHMY, LHFQ…QHMG, SALY…IFFV, ALIS…IYVH, and FLVH…LILI. 2 residues coordinate [4Fe-4S] cluster: Cys567 and Cys576. The next 2 membrane-spanning stretches (helical) occupy residues 583–604 and 651–673; these read AMYL…YWHW and LSPW…MFLI. Residues His662, Met670, and Tyr678 each coordinate divinyl chlorophyll a. Trp679 contacts phylloquinone. A helical transmembrane segment spans residues 715-735; that stretch reads LVGLAHFTIGNILTFGAFVIA.

This sequence belongs to the PsaA/PsaB family. In terms of assembly, the PsaA/B heterodimer binds the P700 divinyl chlorophyll special pair and subsequent electron acceptors. PSI consists of a core antenna complex that captures photons, and an electron transfer chain that converts photonic excitation into a charge separation. The cyanobacterial PSI reaction center is composed of one copy each of PsaA,B,C,D,E,F,I,J,K,L,M and X, and forms trimeric complexes. It depends on PSI electron transfer chain: 5 divinyl chlorophyll a, 1 divinyl chlorophyll a', 2 phylloquinones and 3 4Fe-4S clusters. PSI core antenna: 90 divinyl chlorophyll a, 22 carotenoids, 3 phospholipids and 1 galactolipid. P700 is a divinyl chlorophyll a/divinyl chlorophyll a' dimer, A0 is one or more divinyl chlorophyll a, A1 is one or both phylloquinones and FX is a shared 4Fe-4S iron-sulfur center. as a cofactor.

The protein resides in the cellular thylakoid membrane. The catalysed reaction is reduced [plastocyanin] + hnu + oxidized [2Fe-2S]-[ferredoxin] = oxidized [plastocyanin] + reduced [2Fe-2S]-[ferredoxin]. In terms of biological role, psaA and PsaB bind P700, the primary electron donor of photosystem I (PSI), as well as the electron acceptors A0, A1 and FX. PSI is a plastocyanin/cytochrome c6-ferredoxin oxidoreductase, converting photonic excitation into a charge separation, which transfers an electron from the donor P700 chlorophyll pair to the spectroscopically characterized acceptors A0, A1, FX, FA and FB in turn. Oxidized P700 is reduced on the lumenal side of the thylakoid membrane by plastocyanin or cytochrome c6. This chain is Photosystem I P700 chlorophyll a apoprotein A2, found in Prochlorococcus marinus (strain MIT 9312).